The following is a 102-amino-acid chain: NADH-quinone oxidoreductase subunit K (102 aa).

3 consecutive transmembrane segments (helical) span residues 6-26 (LEHG…GLMV), 30-50 (ILFV…AFIV), and 62-82 (VMFI…LAIL).

This sequence belongs to the complex I subunit 4L family. NDH-1 is composed of 13 different subunits. Subunits NuoA, H, J, K, L, M, N constitute the membrane sector of the complex.

Its subcellular location is the cell inner membrane. It catalyses the reaction a quinone + NADH + 5 H(+)(in) = a quinol + NAD(+) + 4 H(+)(out). In terms of biological role, NDH-1 shuttles electrons from NADH, via FMN and iron-sulfur (Fe-S) centers, to quinones in the respiratory chain. The immediate electron acceptor for the enzyme in this species is believed to be ubiquinone. Couples the redox reaction to proton translocation (for every two electrons transferred, four hydrogen ions are translocated across the cytoplasmic membrane), and thus conserves the redox energy in a proton gradient. The chain is NADH-quinone oxidoreductase subunit K from Pseudomonas fluorescens (strain SBW25).